The following is a 179-amino-acid chain: MSRIGKNPIPIPDKVNVTLSGLAVTVKGPKGELKRTLPSGVSVNQVDNSIVVAPTSTKRSSRERHGLCRTLVANMVIGVSQGYSKKLEIVGVGSRAQVKGKTLVVSAGYSHPVEVVPPEGITFTVENNTNVTVSGTDKELVGNEAAKIRAIRPPEPYKGKGIKYAGERILRKAGKSGKK.

Belongs to the universal ribosomal protein uL6 family. Part of the 50S ribosomal subunit.

In terms of biological role, this protein binds to the 23S rRNA, and is important in its secondary structure. It is located near the subunit interface in the base of the L7/L12 stalk, and near the tRNA binding site of the peptidyltransferase center. This Synechococcus sp. (strain CC9311) protein is Large ribosomal subunit protein uL6.